Reading from the N-terminus, the 199-residue chain is Imidazoleglycerol-phosphate dehydratase (199 aa).

It belongs to the imidazoleglycerol-phosphate dehydratase family.

It localises to the cytoplasm. It carries out the reaction D-erythro-1-(imidazol-4-yl)glycerol 3-phosphate = 3-(imidazol-4-yl)-2-oxopropyl phosphate + H2O. It participates in amino-acid biosynthesis; L-histidine biosynthesis; L-histidine from 5-phospho-alpha-D-ribose 1-diphosphate: step 6/9. This is Imidazoleglycerol-phosphate dehydratase from Bifidobacterium longum (strain NCC 2705).